We begin with the raw amino-acid sequence, 352 residues long: MKKVVVGLSGGVDSSTAAAILHNQGYEVIGLTLWLMKGKGQCCSEGMIDAAYICEQLGIPHEVVDMRDVFQTHIVDYLVTGYGAGITPLPCSQCNKTVKFGPMVQYAREQLGCDRIATGHYARISYDEASGRYQLLRAVDRNKDQSYFLYDLSQDLLAASLFPLGEMEKADTRRIATEHGLKTADKPESQDLCLVESNGSMRAFLDKYIAPKKGDIVDTAGKILGQHDGVHHYTIGQRKGLGIAAPEPLYVVELDAVNNKVVVGDRTKATQEECTVSRVNWVSIPEPSTPIRAAVQIRYRSAPEPVTVIPLENSRVRLVFDEPQFSITPGQAAVWYDGDKVLGGGIIEQFSN.

Residues 7–14 (GLSGGVDS) and Leu33 contribute to the ATP site. Cys94 acts as the Nucleophile in catalysis. A disulfide bond links Cys94 and Cys193. Gly119 lines the ATP pocket. The interaction with tRNA stretch occupies residues 143-145 (KDQ). The Cysteine persulfide intermediate role is filled by Cys193. An interaction with tRNA region spans residues 298–299 (RY).

The protein belongs to the MnmA/TRMU family.

It is found in the cytoplasm. The enzyme catalyses S-sulfanyl-L-cysteinyl-[protein] + uridine(34) in tRNA + AH2 + ATP = 2-thiouridine(34) in tRNA + L-cysteinyl-[protein] + A + AMP + diphosphate + H(+). Its function is as follows. Catalyzes the 2-thiolation of uridine at the wobble position (U34) of tRNA, leading to the formation of s(2)U34. This chain is tRNA-specific 2-thiouridylase MnmA, found in Trichormus variabilis (strain ATCC 29413 / PCC 7937) (Anabaena variabilis).